A 271-amino-acid chain; its full sequence is MFSIQQPLLVFSDLDGTLLDSHSYDWQPAAPWLSRLREANVPVILCSSKTSAEMLYLQKTLGLQGLPLIAENGAVIQLAEQWQDIDGFPRIISGISHGEISQVLNTLREKEHFKFTTFDDVDDATIAEWTGLSRSQAALTQLHEASVTLIWRDSDERMAQFTARLNELGLQFMQGARFWHVLDASAGKDQAANWIIATYQQLSGKRPTTLGLGDGPNDAPLLEVMDYAVIVKGLNREGGHLHDEDPAHVWRTQREGPEGWREGLDHFFSAR.

Asp-13 functions as the Nucleophile in the catalytic mechanism. Residues Asp-13, Asp-15, and Asp-214 each contribute to the Mg(2+) site.

Belongs to the HAD-like hydrolase superfamily. MPGP family. Mg(2+) serves as cofactor.

Its subcellular location is the cytoplasm. The enzyme catalyses 2-O-(alpha-D-mannosyl)-3-phosphoglycerate + H2O = (2R)-2-O-(alpha-D-mannosyl)-glycerate + phosphate. In Escherichia coli O81 (strain ED1a), this protein is Mannosyl-3-phosphoglycerate phosphatase.